The following is a 344-amino-acid chain: Phosphate acyltransferase (344 aa).

It belongs to the PlsX family. As to quaternary structure, homodimer. Probably interacts with PlsY.

It is found in the cytoplasm. It catalyses the reaction a fatty acyl-[ACP] + phosphate = an acyl phosphate + holo-[ACP]. The protein operates within lipid metabolism; phospholipid metabolism. Catalyzes the reversible formation of acyl-phosphate (acyl-PO(4)) from acyl-[acyl-carrier-protein] (acyl-ACP). This enzyme utilizes acyl-ACP as fatty acyl donor, but not acyl-CoA. In Yersinia pestis bv. Antiqua (strain Antiqua), this protein is Phosphate acyltransferase.